The sequence spans 505 residues: Maturase K (505 aa).

The protein belongs to the intron maturase 2 family. MatK subfamily.

It localises to the plastid. The protein localises to the chloroplast. Usually encoded in the trnK tRNA gene intron. Probably assists in splicing its own and other chloroplast group II introns. The chain is Maturase K from Calycanthus occidentalis (Spice bush).